Consider the following 552-residue polypeptide: 5'-AMP-activated protein kinase catalytic subunit alpha-2 (552 aa).

A Protein kinase domain is found at 16–268 (YVLGDTLGVG…IKDIREHEWF (253 aa)). Residues 22 to 30 (LGVGTFGKV) and lysine 45 contribute to the ATP site. The active-site Proton acceptor is the aspartate 139. Phosphothreonine; by LKB1 and CaMKK2 is present on threonine 172. Position 258 is a phosphothreonine (threonine 258). The AIS stretch occupies residues 291–376 (EAVKEVCEKF…PERMPPLIAD (86 aa)). A Phosphoserine modification is found at serine 377. Residues 478–520 (EQRSGSSTPQRSCSAAGLHRPRSSVDSSTAENHSLSGSLTGSL) form a disordered region. Residues 480–490 (RSGSSTPQRSC) are compositionally biased toward polar residues. Residue serine 491 is modified to Phosphoserine. The segment covering 501–510 (SVDSSTAENH) has biased composition (polar residues). Positions 511–520 (SLSGSLTGSL) are enriched in low complexity.

The protein belongs to the protein kinase superfamily. CAMK Ser/Thr protein kinase family. SNF1 subfamily. In terms of assembly, AMPK is a heterotrimer of an alpha catalytic subunit (PRKAA1 or PRKAA2), a beta (PRKAB1 or PRKAB2) and a gamma non-catalytic subunits (PRKAG1, PRKAG2 or PRKAG3). Interacts with FNIP1 and FNIP2. Associates with internalized INSR complexes on Golgi/endosomal membranes; PRKAA2/AMPK2 together with ATIC and HACD3/PTPLAD1 is proposed to be part of a signaling network regulating INSR autophosphorylation and endocytosis. Interacts with DUSP29. Interacts with ARF6. The phosphorylated form at Thr-172 mediated by CamKK2 interacts with ACSS2. Mg(2+) serves as cofactor. Ubiquitinated. In terms of processing, phosphorylated at Thr-172 by STK11/LKB1 in complex with STE20-related adapter-alpha (STRADA) pseudo kinase and CAB39. Also phosphorylated at Thr-172 by CAMKK2; triggered by a rise in intracellular calcium ions, without detectable changes in the AMP/ATP ratio. CAMKK1 can also phosphorylate Thr-172, but at much lower level. Dephosphorylated by protein phosphatase 2A and 2C (PP2A and PP2C). Phosphorylated by ULK1; leading to negatively regulate AMPK activity and suggesting the existence of a regulatory feedback loop between ULK1 and AMPK. Dephosphorylated by PPM1A and PPM1B at Thr-172 (mediated by STK11/LKB1). Skeletal muscle, lower levels in liver, heart and kidney.

The protein localises to the cytoplasm. It localises to the nucleus. It carries out the reaction L-seryl-[protein] + ATP = O-phospho-L-seryl-[protein] + ADP + H(+). It catalyses the reaction L-threonyl-[protein] + ATP = O-phospho-L-threonyl-[protein] + ADP + H(+). The catalysed reaction is L-seryl-[acetyl-CoA carboxylase] + ATP = O-phospho-L-seryl-[acetyl-CoA carboxylase] + ADP + H(+). The enzyme catalyses L-seryl-[3-hydroxy-3-methylglutaryl-coenzyme A reductase] + ATP = O-phospho-L-seryl-[3-hydroxy-3-methylglutaryl-coenzyme A reductase] + ADP + H(+). Activated by phosphorylation on Thr-172. Binding of AMP to non-catalytic gamma subunit (PRKAG1, PRKAG2 or PRKAG3) results in allosteric activation, inducing phosphorylation on Thr-172. AMP-binding to gamma subunit also sustains activity by preventing dephosphorylation of Thr-172. ADP also stimulates Thr-172 phosphorylation, without stimulating already phosphorylated AMPK. ATP promotes dephosphorylation of Thr-172, rendering the enzyme inactive. Under physiological conditions AMPK mainly exists in its inactive form in complex with ATP, which is much more abundant than AMP. Selectively inhibited by compound C (6-[4-(2-Piperidin-1-yl-ethoxy)-phenyl)]-3-pyridin-4-yl-pyyrazolo[1,5-a] pyrimidine. Activated by resveratrol, a natural polyphenol present in red wine, and S17834, a synthetic polyphenol. Salicylate/aspirin directly activates kinase activity, primarily by inhibiting Thr-172 dephosphorylation. Its function is as follows. Catalytic subunit of AMP-activated protein kinase (AMPK), an energy sensor protein kinase that plays a key role in regulating cellular energy metabolism. In response to reduction of intracellular ATP levels, AMPK activates energy-producing pathways and inhibits energy-consuming processes: inhibits protein, carbohydrate and lipid biosynthesis, as well as cell growth and proliferation. AMPK acts via direct phosphorylation of metabolic enzymes, and by longer-term effects via phosphorylation of transcription regulators. Regulates lipid synthesis by phosphorylating and inactivating lipid metabolic enzymes such as ACACA, ACACB, GYS1, HMGCR and LIPE; regulates fatty acid and cholesterol synthesis by phosphorylating acetyl-CoA carboxylase (ACACA and ACACB) and hormone-sensitive lipase (LIPE) enzymes, respectively. Promotes lipolysis of lipid droplets by mediating phosphorylation of isoform 1 of CHKA (CHKalpha2). Regulates insulin-signaling and glycolysis by phosphorylating IRS1, PFKFB2 and PFKFB3. Involved in insulin receptor/INSR internalization. AMPK stimulates glucose uptake in muscle by increasing the translocation of the glucose transporter SLC2A4/GLUT4 to the plasma membrane, possibly by mediating phosphorylation of TBC1D4/AS160. Regulates transcription and chromatin structure by phosphorylating transcription regulators involved in energy metabolism such as CRTC2/TORC2, FOXO3, histone H2B, HDAC5, MEF2C, MLXIPL/ChREBP, EP300, HNF4A, p53/TP53, SREBF1, SREBF2 and PPARGC1A. Acts as a key regulator of glucose homeostasis in liver by phosphorylating CRTC2/TORC2, leading to CRTC2/TORC2 sequestration in the cytoplasm. In response to stress, phosphorylates 'Ser-36' of histone H2B (H2BS36ph), leading to promote transcription. Acts as a key regulator of cell growth and proliferation by phosphorylating FNIP1, TSC2, RPTOR, WDR24 and ATG1/ULK1: in response to nutrient limitation, negatively regulates the mTORC1 complex by phosphorylating RPTOR component of the mTORC1 complex and by phosphorylating and activating TSC2. Also phosphorylates and inhibits GATOR2 subunit WDR24 in response to nutrient limitation, leading to suppress glucose-mediated mTORC1 activation. In response to energetic stress, phosphorylates FNIP1, inactivating the non-canonical mTORC1 signaling, thereby promoting nuclear translocation of TFEB and TFE3, and inducing transcription of lysosomal or autophagy genes. In response to nutrient limitation, promotes autophagy by phosphorylating and activating ATG1/ULK1. In that process, it also activates WDR45/WIPI4. Phosphorylates CASP6, thereby preventing its autoprocessing and subsequent activation. AMPK also acts as a regulator of circadian rhythm by mediating phosphorylation of CRY1, leading to destabilize it. May regulate the Wnt signaling pathway by phosphorylating CTNNB1, leading to stabilize it. Also acts as a regulator of cellular polarity by remodeling the actin cytoskeleton; probably by indirectly activating myosin. Also phosphorylates CFTR, EEF2K, KLC1, NOS3 and SLC12A1. Plays an important role in the differential regulation of pro-autophagy (composed of PIK3C3, BECN1, PIK3R4 and UVRAG or ATG14) and non-autophagy (composed of PIK3C3, BECN1 and PIK3R4) complexes, in response to glucose starvation. Can inhibit the non-autophagy complex by phosphorylating PIK3C3 and can activate the pro-autophagy complex by phosphorylating BECN1. Upon glucose starvation, promotes ARF6 activation in a kinase-independent manner leading to cell migration. Upon glucose deprivation mediates the phosphorylation of ACSS2 at 'Ser-659', which exposes the nuclear localization signal of ACSS2, required for its interaction with KPNA1 and nuclear translocation. Upon stress, regulates mitochondrial fragmentation through phosphorylation of MTFR1L. The polypeptide is 5'-AMP-activated protein kinase catalytic subunit alpha-2 (Prkaa2) (Rattus norvegicus (Rat)).